A 162-amino-acid polypeptide reads, in one-letter code: NADH-quinone oxidoreductase subunit I 1 (162 aa).

4Fe-4S ferredoxin-type domains are found at residues 52–82 (LRRY…IEAG) and 93–122 (VRYD…EGPN). The [4Fe-4S] cluster site is built by Cys62, Cys65, Cys68, Cys72, Cys102, Cys105, Cys108, and Cys112.

This sequence belongs to the complex I 23 kDa subunit family. In terms of assembly, NDH-1 is composed of 14 different subunits. Subunits NuoA, H, J, K, L, M, N constitute the membrane sector of the complex. Requires [4Fe-4S] cluster as cofactor.

The protein localises to the cell inner membrane. The enzyme catalyses a quinone + NADH + 5 H(+)(in) = a quinol + NAD(+) + 4 H(+)(out). NDH-1 shuttles electrons from NADH, via FMN and iron-sulfur (Fe-S) centers, to quinones in the respiratory chain. The immediate electron acceptor for the enzyme in this species is believed to be ubiquinone. Couples the redox reaction to proton translocation (for every two electrons transferred, four hydrogen ions are translocated across the cytoplasmic membrane), and thus conserves the redox energy in a proton gradient. The polypeptide is NADH-quinone oxidoreductase subunit I 1 (Rhodopseudomonas palustris (strain ATCC BAA-98 / CGA009)).